The following is a 299-amino-acid chain: Acetylglutamate kinase (299 aa).

Residues 66–67 (GG), arginine 88, and asparagine 196 contribute to the substrate site.

The protein belongs to the acetylglutamate kinase family. ArgB subfamily.

Its subcellular location is the cytoplasm. The catalysed reaction is N-acetyl-L-glutamate + ATP = N-acetyl-L-glutamyl 5-phosphate + ADP. Its pathway is amino-acid biosynthesis; L-arginine biosynthesis; N(2)-acetyl-L-ornithine from L-glutamate: step 2/4. In terms of biological role, catalyzes the ATP-dependent phosphorylation of N-acetyl-L-glutamate. The protein is Acetylglutamate kinase of Alcanivorax borkumensis (strain ATCC 700651 / DSM 11573 / NCIMB 13689 / SK2).